A 1022-amino-acid chain; its full sequence is Protein translocase subunit SecA (1022 aa).

ATP contacts are provided by residues Gln143, 161 to 165 (GEGKT), and Asp661. Positions 973 to 1001 (AGSILSHESDVPSGTAAQQPIKADVKPGR) are disordered. Zn(2+)-binding residues include Cys1005, Cys1007, Cys1016, and His1017.

It belongs to the SecA family. As to quaternary structure, monomer and homodimer. Part of the essential Sec protein translocation apparatus which comprises SecA, SecYEG and auxiliary proteins SecDF. Other proteins may also be involved. The cofactor is Zn(2+).

It localises to the cell inner membrane. It is found in the cytoplasm. The enzyme catalyses ATP + H2O + cellular proteinSide 1 = ADP + phosphate + cellular proteinSide 2.. In terms of biological role, part of the Sec protein translocase complex. Interacts with the SecYEG preprotein conducting channel. Has a central role in coupling the hydrolysis of ATP to the transfer of proteins into and across the cell membrane, serving as an ATP-driven molecular motor driving the stepwise translocation of polypeptide chains across the membrane. This chain is Protein translocase subunit SecA, found in Chlorobium phaeobacteroides (strain DSM 266 / SMG 266 / 2430).